Consider the following 324-residue polypeptide: UDP-N-acetylenolpyruvoylglucosamine reductase (324 aa).

Residues 38–231 (AGGSARRLYV…SRERIRSLLK (194 aa)) form the FAD-binding PCMH-type domain. Residue R195 is part of the active site. S246 (proton donor) is an active-site residue. The active site involves E316.

This sequence belongs to the MurB family. FAD serves as cofactor.

The protein resides in the cytoplasm. The enzyme catalyses UDP-N-acetyl-alpha-D-muramate + NADP(+) = UDP-N-acetyl-3-O-(1-carboxyvinyl)-alpha-D-glucosamine + NADPH + H(+). It participates in cell wall biogenesis; peptidoglycan biosynthesis. In terms of biological role, cell wall formation. The polypeptide is UDP-N-acetylenolpyruvoylglucosamine reductase (Thiobacillus denitrificans (strain ATCC 25259 / T1)).